The following is a 155-amino-acid chain: Ribosomal RNA large subunit methyltransferase H (155 aa).

Residues Leu73, Gly104, and 123–128 (LSPLTL) each bind S-adenosyl-L-methionine.

It belongs to the RNA methyltransferase RlmH family. In terms of assembly, homodimer.

The protein resides in the cytoplasm. It catalyses the reaction pseudouridine(1915) in 23S rRNA + S-adenosyl-L-methionine = N(3)-methylpseudouridine(1915) in 23S rRNA + S-adenosyl-L-homocysteine + H(+). Specifically methylates the pseudouridine at position 1915 (m3Psi1915) in 23S rRNA. This Pseudomonas aeruginosa (strain UCBPP-PA14) protein is Ribosomal RNA large subunit methyltransferase H.